We begin with the raw amino-acid sequence, 407 residues long: Peptide chain release factor subunit 1 (407 aa).

It belongs to the eukaryotic release factor 1 family. As to quaternary structure, heterodimer of two subunits, one of which binds GTP.

The protein localises to the cytoplasm. In terms of biological role, directs the termination of nascent peptide synthesis (translation) in response to the termination codons UAA, UAG and UGA. This chain is Peptide chain release factor subunit 1 (prf1), found in Archaeoglobus fulgidus (strain ATCC 49558 / DSM 4304 / JCM 9628 / NBRC 100126 / VC-16).